Consider the following 862-residue polypeptide: Pentatricopeptide repeat-containing protein At1g74850, chloroplastic (862 aa).

A chloroplast-targeting transit peptide spans 1-66 (MNLAIPNPNS…DLVLGNPSVS (66 aa)). PPR repeat units lie at residues 104–139 (SLND…WCKP), 140–174 (NEHI…GVSR), 175–209 (SVFS…KISP), 210–245 (SILT…GIQP), 246–280 (DIVT…GIVP), 281–315 (DLTT…GSLP), 316–350 (DITS…GCTP), 351–385 (NANT…NTDP), 386–420 (DAAT…NIEP), 421–455 (DMET…DIVP), 456–490 (SSKA…GSNP), 491–525 (SIET…GIPR), 526–560 (NRDT…RCDP), 561–595 (DERT…DILP), and 596–630 (SIMC…RVSN). One can recognise a Smr domain in the interval 713–801 (VDVHRMSEGG…RIMCQRSQLK (89 aa)). The segment at 831-862 (GTRASTSSDTNHSGNPTQRRTRTKKELAGSTA) is disordered. The span at 833-848 (RASTSSDTNHSGNPTQ) shows a compositional bias: polar residues.

Belongs to the PPR family. P subfamily. As to expression, mostly expressed in leaves, stems and flowers, but barely in roots.

It is found in the plastid. Its subcellular location is the chloroplast. Its function is as follows. Involved in plastid gene expression. The protein is Pentatricopeptide repeat-containing protein At1g74850, chloroplastic (PTAC2) of Arabidopsis thaliana (Mouse-ear cress).